We begin with the raw amino-acid sequence, 448 residues long: Serine--tRNA ligase (448 aa).

255-257 is an L-serine binding site; the sequence is TSE. 286–288 contacts ATP; it reads RSE. Glu-309 is a binding site for L-serine. 373–376 lines the ATP pocket; the sequence is EISS. Residue Ser-408 coordinates L-serine.

Belongs to the class-II aminoacyl-tRNA synthetase family. Type-1 seryl-tRNA synthetase subfamily. As to quaternary structure, homodimer. The tRNA molecule binds across the dimer.

The protein resides in the cytoplasm. The catalysed reaction is tRNA(Ser) + L-serine + ATP = L-seryl-tRNA(Ser) + AMP + diphosphate + H(+). It catalyses the reaction tRNA(Sec) + L-serine + ATP = L-seryl-tRNA(Sec) + AMP + diphosphate + H(+). Its pathway is aminoacyl-tRNA biosynthesis; selenocysteinyl-tRNA(Sec) biosynthesis; L-seryl-tRNA(Sec) from L-serine and tRNA(Sec): step 1/1. Catalyzes the attachment of serine to tRNA(Ser). Is also able to aminoacylate tRNA(Sec) with serine, to form the misacylated tRNA L-seryl-tRNA(Sec), which will be further converted into selenocysteinyl-tRNA(Sec). This chain is Serine--tRNA ligase, found in Bordetella petrii (strain ATCC BAA-461 / DSM 12804 / CCUG 43448).